The chain runs to 190 residues: Adenine phosphoribosyltransferase (190 aa).

It belongs to the purine/pyrimidine phosphoribosyltransferase family. As to quaternary structure, homodimer.

It is found in the cytoplasm. The catalysed reaction is AMP + diphosphate = 5-phospho-alpha-D-ribose 1-diphosphate + adenine. Its pathway is purine metabolism; AMP biosynthesis via salvage pathway; AMP from adenine: step 1/1. Its function is as follows. Catalyzes a salvage reaction resulting in the formation of AMP, that is energically less costly than de novo synthesis. The sequence is that of Adenine phosphoribosyltransferase from Cupriavidus pinatubonensis (strain JMP 134 / LMG 1197) (Cupriavidus necator (strain JMP 134)).